Consider the following 277-residue polypeptide: RsbT co-antagonist protein RsbRB (277 aa).

Positions 165 to 276 constitute an STAS domain; sequence SSPVITLSKS…TNLAQALNYH (112 aa). Thr186 carries the phosphothreonine modification.

As to quaternary structure, interacts with RsbRA and RsbS in the stressosome. The stressosome probably also contains RsbRC and RsbRD. Phosphorylated by RsbT.

One of 4 functionally non-identical RsbR paralogs, it functions in the environmental signaling branch of the general stress response. Its function is as follows. Negative regulator of sigma-B activity. Non-phosphorylated RsbS binds to RsbT, preventing its association with RsbU. Requires any one of RsbRA, RsbRB, RsbRC or RsbRD to sequester RsbT. When RsbS and the RsbR paralog(s) are phosphorylated, they release RsbT, which can then bind and activate RsbU. The polypeptide is RsbT co-antagonist protein RsbRB (rsbRB) (Bacillus subtilis (strain 168)).